We begin with the raw amino-acid sequence, 621 residues long: Putative DNA 3'-5' helicase Rad25 (621 aa).

A Helicase ATP-binding domain is found at 268-417 (VERFTEQGSG…EIFTLIGPPI (150 aa)). Position 281-288 (281-288 (GPPGSGKT)) interacts with ATP. The DEAH box motif lies at 371-374 (DEVH). The disordered stretch occupies residues 441–465 (PWGDETEQSEYSSTSGHDRRQAAAS). A Helicase C-terminal domain is found at 469–621 (KIDEIRYALA…EAVEPPAKTE (153 aa)).

Belongs to the helicase family. RAD25/XPB subfamily.

It carries out the reaction Couples ATP hydrolysis with the unwinding of duplex DNA by translocating in the 3'-5' direction.. The catalysed reaction is ATP + H2O = ADP + phosphate + H(+). The polypeptide is Putative DNA 3'-5' helicase Rad25 (Haloarcula marismortui (strain ATCC 43049 / DSM 3752 / JCM 8966 / VKM B-1809) (Halobacterium marismortui)).